Consider the following 271-residue polypeptide: Protein PXR1 (271 aa).

Positions 25–72 (TSRFGHQFLEKFGWKPGMGLGLYPMNSNTSHIKVSIKDDNVGLGAKLK) constitute a G-patch domain. The segment at 147 to 239 (SNAKKRKREG…SASNIPDAVN (93 aa)) is disordered. A compositionally biased stretch (acidic residues) spans 157–168 (DDSEDEDDDDKE). Residues 175–203 (KKHKKHKKHKKDKKKDKKDKKEHKKHKKE) are compositionally biased toward basic residues. The span at 204-221 (EKRLKKEKRAEKTKETKK) shows a compositional bias: basic and acidic residues. Ser-230 carries the phosphoserine modification.

It belongs to the PINX1 family. Interacts with EST2.

The protein resides in the nucleus. The protein localises to the nucleolus. Involved in rRNA-processing at A0, A1 and A2 sites through its action in U18 and U24 snoRNA 3'-end final trimming. Negative regulator of telomerase throughX competition for binding to EST2 with TLC1. This is Protein PXR1 (PXR1) from Saccharomyces cerevisiae (strain YJM789) (Baker's yeast).